A 97-amino-acid polypeptide reads, in one-letter code: uncharacterized protein (97 aa).

The N-terminal stretch at 1–16 is a signal peptide; the sequence is MKQTVLLLFTALFLSG. C17 carries N-palmitoyl cysteine lipidation. C17 carries S-diacylglycerol cysteine lipidation.

The protein localises to the cell membrane. This is an uncharacterized protein from Bacillus subtilis (strain 168).